A 311-amino-acid chain; its full sequence is Cytosolic Fe-S cluster assembly factor Nubp1 homolog (311 aa).

The segment at 1–20 (MQAPPPEHCPGVESENAGKG) is disordered. [4Fe-4S] cluster-binding residues include C9, C23, C26, and C32. 63 to 70 (GKGGVGKS) lines the ATP pocket. 2 residues coordinate [4Fe-4S] cluster: C240 and C243.

Belongs to the Mrp/NBP35 ATP-binding proteins family. NUBP1/NBP35 subfamily. Heterotetramer of 2 Nubp1 and 2 Nubp2 chains. The cofactor is [4Fe-4S] cluster.

The protein resides in the cytoplasm. In terms of biological role, component of the cytosolic iron-sulfur (Fe/S) protein assembly (CIA) machinery. Required for maturation of extramitochondrial Fe-S proteins. The Nubp1-Nubp2 heterotetramer forms a Fe-S scaffold complex, mediating the de novo assembly of an Fe-S cluster and its transfer to target apoproteins. The protein is Cytosolic Fe-S cluster assembly factor Nubp1 homolog of Drosophila simulans (Fruit fly).